Here is a 213-residue protein sequence, read N- to C-terminus: Protein DMP4 (213 aa).

4 helical membrane-spanning segments follow: residues 51–71 (LANL…PIFS), 78–98 (LVSK…CFIL), 142–162 (FIDF…VLFD), and 180–200 (VLTA…ATFP).

This sequence belongs to the plant DMP1 protein family. As to expression, expressed in leaves, flowers and siliques, especially in vascular tissues.

Its subcellular location is the vacuole membrane. Functionally, involved in membrane remodeling. The polypeptide is Protein DMP4 (Arabidopsis thaliana (Mouse-ear cress)).